The chain runs to 641 residues: tRNA 5-methylaminomethyl-2-thiouridine biosynthesis bifunctional protein MnmC (641 aa).

Residues 1-219 (MTVSKILKQI…PYPICSAAVT (219 aa)) are tRNA (mnm(5)s(2)U34)-methyltransferase. Positions 232–641 (IGGGVASACL…GKALEVGVEV (410 aa)) are FAD-dependent cmnm(5)s(2)U34 oxidoreductase.

This sequence in the N-terminal section; belongs to the methyltransferase superfamily. tRNA (mnm(5)s(2)U34)-methyltransferase family. It in the C-terminal section; belongs to the DAO family. FAD is required as a cofactor.

Its subcellular location is the cytoplasm. It catalyses the reaction 5-aminomethyl-2-thiouridine(34) in tRNA + S-adenosyl-L-methionine = 5-methylaminomethyl-2-thiouridine(34) in tRNA + S-adenosyl-L-homocysteine + H(+). Functionally, catalyzes the last two steps in the biosynthesis of 5-methylaminomethyl-2-thiouridine (mnm(5)s(2)U) at the wobble position (U34) in tRNA. Catalyzes the FAD-dependent demodification of cmnm(5)s(2)U34 to nm(5)s(2)U34, followed by the transfer of a methyl group from S-adenosyl-L-methionine to nm(5)s(2)U34, to form mnm(5)s(2)U34. This is tRNA 5-methylaminomethyl-2-thiouridine biosynthesis bifunctional protein MnmC from Shewanella pealeana (strain ATCC 700345 / ANG-SQ1).